A 160-amino-acid chain; its full sequence is SsrA-binding protein (160 aa).

It belongs to the SmpB family.

Its subcellular location is the cytoplasm. In terms of biological role, required for rescue of stalled ribosomes mediated by trans-translation. Binds to transfer-messenger RNA (tmRNA), required for stable association of tmRNA with ribosomes. tmRNA and SmpB together mimic tRNA shape, replacing the anticodon stem-loop with SmpB. tmRNA is encoded by the ssrA gene; the 2 termini fold to resemble tRNA(Ala) and it encodes a 'tag peptide', a short internal open reading frame. During trans-translation Ala-aminoacylated tmRNA acts like a tRNA, entering the A-site of stalled ribosomes, displacing the stalled mRNA. The ribosome then switches to translate the ORF on the tmRNA; the nascent peptide is terminated with the 'tag peptide' encoded by the tmRNA and targeted for degradation. The ribosome is freed to recommence translation, which seems to be the essential function of trans-translation. This chain is SsrA-binding protein, found in Haemophilus ducreyi (strain 35000HP / ATCC 700724).